Consider the following 463-residue polypeptide: MKTRTEKDTFGPIEVPEQHLWGAQTQRSLHFFAISTEKMPVPLVAAMARLKRAAAKVNAELGELDPQVADAIMRAADEVVAGKWPDEFPLSVWQTGSGTQSNMNMNEVLANRASELLGGERGEGRKVHPNDHVNRGQSSNDTFPTAMHVAAAVEVEHRVLPALKALRGTLAAKSAAFYDIVKIGRTHLQDATPLTLGQEISGYVAQLDLAEQQIRATLAGLHQLAIGGTAVGTGLNAHPQFSAKVSAELAHDTGSAFVSAPNKFQALASHEALLFAHGALKTLAAGLMKIANDVRWLASGPRSGLGEISIPENEPGSSIMPGKVNPTQCEAVTMLAAQVMGNDVAINVGGASGNFELNVFKPLVIHNFLQSVRLLADGMVSFDKHCAAGIEPNRERITELVERSLMLVTALNPHIGYDKAAQIAKKAHKENLSLKEAALALGHLTEAQFAEWVVPGDMTNARR.

Substrate contacts are provided by residues 97–99, R125, 128–131, 138–140, and T186; these read SGT, HPND, and SSN. Residues 121-134 show a composition bias toward basic and acidic residues; sequence RGEGRKVHPNDHVN. The disordered stretch occupies residues 121-142; that stretch reads RGEGRKVHPNDHVNRGQSSNDT. The active-site Proton donor/acceptor is the H187. S317 is a catalytic residue. Substrate is bound by residues S318 and 323 to 325; that span reads KVN.

It belongs to the class-II fumarase/aspartase family. Fumarase subfamily. Homotetramer.

It localises to the cytoplasm. The enzyme catalyses (S)-malate = fumarate + H2O. It functions in the pathway carbohydrate metabolism; tricarboxylic acid cycle; (S)-malate from fumarate: step 1/1. Its function is as follows. Involved in the TCA cycle. Catalyzes the stereospecific interconversion of fumarate to L-malate. This Bordetella bronchiseptica (strain ATCC BAA-588 / NCTC 13252 / RB50) (Alcaligenes bronchisepticus) protein is Fumarate hydratase class II.